Here is a 413-residue protein sequence, read N- to C-terminus: ORC1-type DNA replication protein 10 (413 aa).

ATP contacts are provided by residues 63-67 (VGKTA), tyrosine 211, and arginine 223.

This sequence belongs to the CDC6/cdc18 family.

Functionally, involved in regulation of DNA replication. In Halobacterium salinarum (strain ATCC 700922 / JCM 11081 / NRC-1) (Halobacterium halobium), this protein is ORC1-type DNA replication protein 10 (orc10).